An 894-amino-acid chain; its full sequence is Peroxisomal hydratase-dehydrogenase-epimerase (894 aa).

2 short-chain dehydrogenase like regions span residues 6-230 (RFDG…HKNN) and 311-523 (DFKG…CSDK). The NADP(+) site is built by Val-14, Lys-53, Asn-99, Arg-132, Tyr-164, Lys-168, and Ala-197. The active-site Proton acceptor is Tyr-164. Lys-168 (lowers pKa of active site Tyr) is an active-site residue. The active-site Proton acceptor is Tyr-458. Residues His-693, Gly-694, and Lys-723 each contribute to the (3R)-3-hydroxydecanoyl-CoA site. The tract at residues 763–782 (KKPADRGASTAANKPPARSP) is disordered. The 112-residue stretch at 776–887 (KPPARSPDAV…VKETGKLAIS (112 aa)) folds into the MaoC-like domain. The (3R)-3-hydroxydecanoyl-CoA site is built by Asp-803, Asn-805, Gly-826, Phe-851, and Gly-853.

It belongs to the short-chain dehydrogenases/reductases (SDR) family. In terms of assembly, monomer.

It localises to the peroxisome. The catalysed reaction is a (3R)-3-hydroxyacyl-CoA = a (2E)-enoyl-CoA + H2O. It catalyses the reaction a (3R)-3-hydroxyacyl-CoA + NAD(+) = a 3-oxoacyl-CoA + NADH + H(+). It functions in the pathway lipid metabolism; fatty acid beta-oxidation. Its function is as follows. Second trifunctional enzyme acting on the beta-oxidation pathway for fatty acids, possessing hydratase-dehydrogenase-epimerase activities. Converts trans-2-enoyl-CoA via D-3-hydroxyacyl-CoA to 3-ketoacyl-CoA. The chain is Peroxisomal hydratase-dehydrogenase-epimerase (fox-2) from Neurospora crassa (strain ATCC 24698 / 74-OR23-1A / CBS 708.71 / DSM 1257 / FGSC 987).